A 90-amino-acid polypeptide reads, in one-letter code: U7-theraphotoxin-Hhn1a 2 (90 aa).

Positions 1-19 (MKIAIFTVVLALAVFAVLS) are cleaved as a signal peptide. The propeptide occupies 20 to 50 (FGWEANEKALSEEFTELIHEKEAASETEARE). 3 disulfides stabilise this stretch: cysteine 51-cysteine 65, cysteine 58-cysteine 70, and cysteine 64-cysteine 81.

The protein belongs to the neurotoxin 10 (Hwtx-1) family. 13 (Hntx-13) subfamily. Expressed by the venom gland.

Its subcellular location is the secreted. Functionally, ion channel inhibitor. The protein is U7-theraphotoxin-Hhn1a 2 of Cyriopagopus hainanus (Chinese bird spider).